Consider the following 315-residue polypeptide: MTDSNANRPPRLPRREVHGVLLLDKPLGLSSNDALVRAKRLLRAAKAGHTGTLDPLATGLLPLCFGEATKFSQDLLEADKTYDAEVRLGARSSTGDAEGELLDVRAVTCDRAAVEQALEGFIGEIEQVPPMHSALKKDGRPLYEYARAGQTVERAARRVTIRSIALLECALPGAPSFTMRVTCSKGTYIRTLAEDIGEALGCGAHLTGLRRIAVGDLTLDGAVTLAQIEAQDDAQRPAMLAPVDALLQKCVPVQLDAAAAGRFLQGQRIAQRDLPVGTALAENSLARVYAGEPSRLLGVARMREGALRPERLVKL.

The Nucleophile role is filled by aspartate 54.

Belongs to the pseudouridine synthase TruB family. Type 1 subfamily.

It carries out the reaction uridine(55) in tRNA = pseudouridine(55) in tRNA. Its function is as follows. Responsible for synthesis of pseudouridine from uracil-55 in the psi GC loop of transfer RNAs. This chain is tRNA pseudouridine synthase B, found in Cupriavidus taiwanensis (strain DSM 17343 / BCRC 17206 / CCUG 44338 / CIP 107171 / LMG 19424 / R1) (Ralstonia taiwanensis (strain LMG 19424)).